The primary structure comprises 756 residues: Tubulin glycylase 3B (756 aa).

The disordered stretch occupies residues 104-123 (TPLPRTVTSSPTAPEAQKRQ). Residues 272–629 (LEERMAFIED…DLPKNPTAAT (358 aa)) form the TTL domain. ATP contacts are provided by residues 440–443 (QKYI), Lys453, and Asp455. The interval 709–736 (ITKKKKLSASAGSSTAASAQPSTQNLTT) is disordered. Low complexity predominate over residues 716 to 727 (SASAGSSTAASA).

The protein localises to the cytoplasm. It localises to the cytoskeleton. The protein resides in the nucleus. Essential glycylase which modifies both tubulin and non-tubulin proteins, generating side chains of glycine on the gamma-carboxyl groups of specific glutamate residues of target proteins. Monoglycylates alpha-tubulin by adding a single glycine chain to generate monoglycine side chains, but is not involved in elongation step to generate polyglycine side chains on alpha-tubulin. Has the ability to both mono- and polyglycylate non-tubulin proteins such as up (Troponin T). Required for early steps of spermatogenesis. The polypeptide is Tubulin glycylase 3B (TTLL3B) (Drosophila melanogaster (Fruit fly)).